Here is a 334-residue protein sequence, read N- to C-terminus: Dual specificity mitogen-activated protein kinase kinase 6 (334 aa).

Residues 1 to 11 show a composition bias toward basic residues; the sequence is MSQSKGKKRNP. The tract at residues 1–34 is disordered; it reads MSQSKGKKRNPGLKIPKEAFEQPQTSSTPPRDLD. Residues 4–19 form a d domain region; the sequence is SKGKKRNPGLKIPKEA. A Protein kinase domain is found at 53 to 314; that stretch reads LEPIMELGRG…YPELMQHPFF (262 aa). Residues 59-67 and K82 each bind ATP; that span reads LGRGAYGVV. The Proton acceptor role is filled by D179. S207 carries the (Microbial infection) O-acetylserine; by Yersinia YopJ; alternate modification. Phosphoserine; by MAP3K; alternate is present on S207. T211 bears the (Microbial infection) O-acetylthreonine; by Yersinia YopJ; alternate mark. At T211 the chain carries Phosphothreonine; by MAP3K; alternate. The interval 311-334 is DVD domain; it reads HPFFTLHESKGTDVASFVKLILGD.

The protein belongs to the protein kinase superfamily. STE Ser/Thr protein kinase family. MAP kinase kinase subfamily. As to quaternary structure, dimer. Interacts (via its D domain) with its substrates MAPK11, MAPK12, MAPK13 and MAPK14. Interacts (via its DVD domain) with MAP3Ks activators like MAP3K5/ASK1, MAP3K1/MEKK1, MAP3K2/MEKK2, MAP3K3/MEKK3, MAP3K4/MEKK4, MAP3K7/TAK1, MAP3K11/MLK3 and MAP3K17/TAOK2. Interacts with DCTN1. Interacts with EIF2AK2/PKR. (Microbial infection) Interacts with Yersinia YopJ. Weakly autophosphorylated. Phosphorylated at Ser-207 and Thr-211 by the majority of M3Ks, such as MAP3K5/ASK1, MAP3K1/MEKK1, MAP3K2/MEKK2, MAP3K3/MEKK3, MAP3K4/MEKK4, MAP3K7/TAK1, MAP3K11/MLK3 and MAP3K17/TAOK2. In terms of processing, in response to genotoxic stress, MAP3K-phosphorylated MAP2K6 is ubiquitinated and degraded by the SCF(FBXO31) complex. Post-translationally, (Microbial infection) Acetylation of Ser-207 and Thr-211 by Yersinia YopJ prevents phosphorylation and activation, thus blocking the MAPK signaling pathway. Isoform 2 is only expressed in skeletal muscle. Isoform 1 is expressed in skeletal muscle, heart, and in lesser extent in liver or pancreas.

Its subcellular location is the nucleus. It is found in the cytoplasm. The protein localises to the cytoskeleton. It carries out the reaction L-seryl-[protein] + ATP = O-phospho-L-seryl-[protein] + ADP + H(+). The catalysed reaction is L-threonyl-[protein] + ATP = O-phospho-L-threonyl-[protein] + ADP + H(+). It catalyses the reaction L-tyrosyl-[protein] + ATP = O-phospho-L-tyrosyl-[protein] + ADP + H(+). Activated by dual phosphorylation on Ser-207 and Thr-211 in response to a variety of cellular stresses, including UV radiation, osmotic shock, hypoxia, inflammatory cytokines, interferon gamma (IFNG), and less often by growth factors. MAP2K6/MKK6 is activated by the majority of M3Ks, such as MAP3K5/ASK1, MAP3K1/MEKK1, MAP3K2/MEKK2, MAP3K3/MEKK3, MAP3K4/MEKK4, MAP3K7/TAK1, MAP3K11/MLK3 and MAP3K17/TAOK2. Functionally, dual specificity protein kinase which acts as an essential component of the MAP kinase signal transduction pathway. With MAP3K3/MKK3, catalyzes the concomitant phosphorylation of a threonine and a tyrosine residue in the MAP kinases p38 MAPK11, MAPK12, MAPK13 and MAPK14 and plays an important role in the regulation of cellular responses to cytokines and all kinds of stresses. Especially, MAP2K3/MKK3 and MAP2K6/MKK6 are both essential for the activation of MAPK11 and MAPK13 induced by environmental stress, whereas MAP2K6/MKK6 is the major MAPK11 activator in response to TNF. MAP2K6/MKK6 also phosphorylates and activates PAK6. The p38 MAP kinase signal transduction pathway leads to direct activation of transcription factors. Nuclear targets of p38 MAP kinase include the transcription factors ATF2 and ELK1. Within the p38 MAPK signal transduction pathway, MAP3K6/MKK6 mediates phosphorylation of STAT4 through MAPK14 activation, and is therefore required for STAT4 activation and STAT4-regulated gene expression in response to IL-12 stimulation. The pathway is also crucial for IL-6-induced SOCS3 expression and down-regulation of IL-6-mediated gene induction; and for IFNG-dependent gene transcription. Has a role in osteoclast differentiation through NF-kappa-B transactivation by TNFSF11, and in endochondral ossification and since SOX9 is another likely downstream target of the p38 MAPK pathway. MAP2K6/MKK6 mediates apoptotic cell death in thymocytes. Acts also as a regulator for melanocytes dendricity, through the modulation of Rho family GTPases. The protein is Dual specificity mitogen-activated protein kinase kinase 6 (MAP2K6) of Homo sapiens (Human).